We begin with the raw amino-acid sequence, 545 residues long: Membrane protein insertase YidC (545 aa).

The next 4 membrane-spanning stretches (helical) occupy residues 350–370, 424–444, 461–481, and 498–518; these read IIGN…AVLY, LPML…FASV, ADPY…QTYL, and PLVF…YWVV.

The protein belongs to the OXA1/ALB3/YidC family. Type 1 subfamily. As to quaternary structure, interacts with the Sec translocase complex via SecD. Specifically interacts with transmembrane segments of nascent integral membrane proteins during membrane integration.

Its subcellular location is the cell inner membrane. Required for the insertion and/or proper folding and/or complex formation of integral membrane proteins into the membrane. Involved in integration of membrane proteins that insert both dependently and independently of the Sec translocase complex, as well as at least some lipoproteins. Aids folding of multispanning membrane proteins. The polypeptide is Membrane protein insertase YidC (Neisseria meningitidis serogroup B (strain ATCC BAA-335 / MC58)).